A 294-amino-acid chain; its full sequence is Phosphate import ATP-binding protein PstB (294 aa).

Positions 1–18 (MSETMTNQNVVNEEQPFN) are enriched in polar residues. Residues 1–24 (MSETMTNQNVVNEEQPFNESKHRS) form a disordered region. The ABC transporter domain maps to 48–289 (LEVNKLKLFY…PSCKQTEDYI (242 aa)). 80-87 (GPSGCGKS) contributes to the ATP binding site.

This sequence belongs to the ABC transporter superfamily. Phosphate importer (TC 3.A.1.7) family. In terms of assembly, the complex is composed of two ATP-binding proteins (PstB), two transmembrane proteins (PstC and PstA) and a solute-binding protein (PstS).

The protein localises to the cell inner membrane. It carries out the reaction phosphate(out) + ATP + H2O = ADP + 2 phosphate(in) + H(+). Functionally, part of the ABC transporter complex PstSACB involved in phosphate import. Responsible for energy coupling to the transport system. This is Phosphate import ATP-binding protein PstB from Hahella chejuensis (strain KCTC 2396).